The following is a 437-amino-acid chain: Probable cysteine desulfurase (437 aa).

An N6-(pyridoxal phosphate)lysine modification is found at lysine 258.

Belongs to the class-V pyridoxal-phosphate-dependent aminotransferase family. Csd subfamily. It depends on pyridoxal 5'-phosphate as a cofactor.

The enzyme catalyses (sulfur carrier)-H + L-cysteine = (sulfur carrier)-SH + L-alanine. Functionally, catalyzes the removal of elemental sulfur and selenium atoms from L-cysteine, L-cystine, L-selenocysteine, and L-selenocystine to produce L-alanine. The sequence is that of Probable cysteine desulfurase (csd) from Haemophilus influenzae (strain ATCC 51907 / DSM 11121 / KW20 / Rd).